A 106-amino-acid polypeptide reads, in one-letter code: Protein RnfH (106 aa).

This sequence belongs to the UPF0125 (RnfH) family.

This chain is Protein RnfH, found in Ectopseudomonas mendocina (strain ymp) (Pseudomonas mendocina).